The chain runs to 604 residues: Threonine--tRNA ligase (604 aa).

Residues Asp-210–Pro-501 are catalytic. Zn(2+)-binding residues include Cys-302, His-353, and His-478.

It belongs to the class-II aminoacyl-tRNA synthetase family. As to quaternary structure, homodimer. It depends on Zn(2+) as a cofactor.

It is found in the cytoplasm. The catalysed reaction is tRNA(Thr) + L-threonine + ATP = L-threonyl-tRNA(Thr) + AMP + diphosphate + H(+). Its function is as follows. Catalyzes the attachment of threonine to tRNA(Thr) in a two-step reaction: L-threonine is first activated by ATP to form Thr-AMP and then transferred to the acceptor end of tRNA(Thr). Also edits incorrectly charged L-seryl-tRNA(Thr). This is Threonine--tRNA ligase from Sulfurovum sp. (strain NBC37-1).